A 554-amino-acid chain; its full sequence is Carboxypeptidase Y homolog A (554 aa).

A signal peptide spans 1–17 (MRISASTVLLGAASAAS). Positions 18–137 (AASFQNQAQQ…QLDNFNLRVK (120 aa)) are excised as a propeptide. Disulfide bonds link Cys191-Cys431, Cys325-Cys339, Cys349-Cys372, Cys356-Cys365, and Cys394-Cys401. A glycan (N-linked (GlcNAc...) asparagine) is linked at Asn222. The active site involves Ser278. Asp470 is a catalytic residue. An N-linked (GlcNAc...) asparagine glycan is attached at Asn518. Residue His529 is part of the active site.

This sequence belongs to the peptidase S10 family.

The protein localises to the vacuole. The enzyme catalyses Release of a C-terminal amino acid with broad specificity.. Its function is as follows. Vacuolar carboxypeptidase involved in degradation of small peptides. Digests preferentially peptides containing an aliphatic or hydrophobic residue in P1' position, as well as methionine, leucine or phenylalanine in P1 position of ester substrate. This is Carboxypeptidase Y homolog A (CPYA) from Sordaria macrospora (strain ATCC MYA-333 / DSM 997 / K(L3346) / K-hell).